The sequence spans 202 residues: Ras-related protein RIC1 (202 aa).

GTP contacts are provided by residues 15–23 (GDSGVGKSC), 33–40 (YLESYIST), 63–67 (DTAGQ), 121–124 (NKCD), and 151–153 (SAK). The short motif at 37–45 (YISTIGVDF) is the Effector region element. Residues 174–185 (ASQPATNASKPA) show a composition bias toward polar residues. The segment at 174–202 (ASQPATNASKPATVQMRGQPVAQQSSCCS) is disordered. Residues cysteine 200 and cysteine 201 are each lipidated (S-geranylgeranyl cysteine).

This sequence belongs to the small GTPase superfamily. Rab family.

The protein localises to the cell membrane. Functionally, possesses GTPase activity. The chain is Ras-related protein RIC1 (RIC1) from Oryza sativa subsp. japonica (Rice).